Reading from the N-terminus, the 1982-residue chain is CASP8-associated protein 2 (1982 aa).

N-acetylalanine is present on Ala2. Ser20 is subject to Phosphoserine. The segment covering 159 to 191 (VKTKDLKSRSPHLDDCSKTDHRAKSDVSKDVHH) has biased composition (basic and acidic residues). A disordered region spans residues 159 to 552 (VKTKDLKSRS…ESGPNETKNK (394 aa)). Ser194 is subject to Phosphoserine. Residues 198-210 (LEKEGKPHSDKRS) show a composition bias toward basic and acidic residues. A compositionally biased stretch (polar residues) spans 225 to 240 (GVWSRSHYQVGEGSSN). A compositionally biased stretch (basic and acidic residues) spans 286-395 (GHPEKYGKGE…ERASLPHSKN (110 aa)). Polar residues predominate over residues 396-405 (EITFSHNSSK). 3 stretches are compositionally biased toward basic and acidic residues: residues 406–423 (YHLE…DKSV), 444–455 (KNIDSKEVDAMH), and 463–524 (KAER…KGEV). Ser567 carries the post-translational modification Phosphoserine. The segment at 569 to 593 (AKKQPVSQDNQHKITDIPKSSGVCD) is disordered. Residues Ser658, Ser815, and Ser875 each carry the phosphoserine modification. 3 disordered regions span residues 875 to 1017 (SPPQ…DKVM), 1157 to 1188 (FGRD…DNSN), and 1251 to 1283 (ERSL…HATL). Positions 894–904 (SAHSTSKSQSD) are enriched in polar residues. Composition is skewed to basic and acidic residues over residues 905–924 (LNKE…EADT), 936–965 (GEIR…DVRK), 999–1016 (KRPD…KDKV), and 1157–1170 (FGRD…EKTS). At Ser940 the chain carries Phosphoserine. The residue at position 1161 (Ser1161) is a Phosphoserine. Polar residues-rich tracts occupy residues 1171-1181 (KQNAQYSNSQK) and 1269-1281 (GSSI…SQHA). Lys1343 is subject to N6-acetyllysine. Residues 1683-1687 (YVDLT) carry the SUMO interaction motif 1 (SIM); mediates the binding to polysumoylated substrates motif. The tract at residues 1709–1982 (DQLGCSGGNL…MKLFEKSKCR (274 aa)) is NCOA2-binding. Residues 1737–1741 (FIDLT) carry the SUMO interaction motif 2 (SIM); mediates the binding to polysumoylated substrates motif. The short motif at 1794 to 1798 (YIDLT) is the SUMO interaction motif 3 (SIM); mediates the binding to polysumoylated substrates element. Residues 1803-1909 (SSCEVKKDEL…IKDSSAALAT (107 aa)) are disordered. The segment covering 1851-1865 (KETDLTNKEKTKKPT) has biased composition (basic and acidic residues).

As to quaternary structure, self-associates. Component of the death-inducing signaling complex (DISC) with CASP8, FADD and FAS. Interacts with NCOA2 and NCOA3. Interacts with SRRT. Interacts with TRAF2. Interacts with NPAT. Interacts (via SIM domains) with SUMO1 and SUMO2. Interacts with SP100; may negatively regulate CASP8AP2 export from the nucleus to the cytoplasm.

The protein resides in the cytoplasm. Its subcellular location is the nucleus. The protein localises to the PML body. It localises to the mitochondrion. Functionally, participates in TNF-alpha-induced blockade of glucocorticoid receptor (GR) transactivation at the nuclear receptor coactivator level, upstream and independently of NF-kappa-B. Suppresses both NCOA2- and NCOA3-induced enhancement of GR transactivation. Involved in TNF-alpha-induced activation of NF-kappa-B via a TRAF2-dependent pathway. Acts as a downstream mediator for CASP8-induced activation of NF-kappa-B. Required for the activation of CASP8 in FAS-mediated apoptosis. Required for histone gene transcription and progression through S phase. The polypeptide is CASP8-associated protein 2 (Homo sapiens (Human)).